The chain runs to 244 residues: 2-C-methyl-D-erythritol 4-phosphate cytidylyltransferase (244 aa).

Belongs to the IspD/TarI cytidylyltransferase family. IspD subfamily.

The enzyme catalyses 2-C-methyl-D-erythritol 4-phosphate + CTP + H(+) = 4-CDP-2-C-methyl-D-erythritol + diphosphate. Its pathway is isoprenoid biosynthesis; isopentenyl diphosphate biosynthesis via DXP pathway; isopentenyl diphosphate from 1-deoxy-D-xylulose 5-phosphate: step 2/6. Functionally, catalyzes the formation of 4-diphosphocytidyl-2-C-methyl-D-erythritol from CTP and 2-C-methyl-D-erythritol 4-phosphate (MEP). The chain is 2-C-methyl-D-erythritol 4-phosphate cytidylyltransferase from Solibacter usitatus (strain Ellin6076).